Consider the following 84-residue polypeptide: Cell division topological specificity factor (84 aa).

The protein belongs to the MinE family.

Its function is as follows. Prevents the cell division inhibition by proteins MinC and MinD at internal division sites while permitting inhibition at polar sites. This ensures cell division at the proper site by restricting the formation of a division septum at the midpoint of the long axis of the cell. The protein is Cell division topological specificity factor of Paraburkholderia phytofirmans (strain DSM 17436 / LMG 22146 / PsJN) (Burkholderia phytofirmans).